We begin with the raw amino-acid sequence, 283 residues long: Phosphate import ATP-binding protein PstB (283 aa).

Residues Met-1–Ser-20 show a composition bias toward polar residues. The disordered stretch occupies residues Met-1–Ser-32. One can recognise an ABC transporter domain in the interval Tyr-37–Ile-278. Residue Gly-69–Ser-76 coordinates ATP.

This sequence belongs to the ABC transporter superfamily. Phosphate importer (TC 3.A.1.7) family. The complex is composed of two ATP-binding proteins (PstB), two transmembrane proteins (PstC and PstA) and a solute-binding protein (PstS).

The protein localises to the cell membrane. It catalyses the reaction phosphate(out) + ATP + H2O = ADP + 2 phosphate(in) + H(+). Part of the ABC transporter complex PstSACB involved in phosphate import. Responsible for energy coupling to the transport system. In Staphylococcus aureus (strain USA300), this protein is Phosphate import ATP-binding protein PstB.